The sequence spans 370 residues: Heme A synthase (370 aa).

Transmembrane regions (helical) follow at residues 15 to 35, 104 to 124, 129 to 149, 161 to 181, 200 to 220, 261 to 280, 293 to 313, and 317 to 337; these read VRIW…VGGA, VIGI…AIGP, ALWI…WMVA, VRLA…VWTL, ALAL…VAGL, QFDH…LHMI, GAVL…FTVL, and PIDL…LAVL. A heme-binding site is contributed by H264. H324 is a binding site for heme.

The protein belongs to the COX15/CtaA family. Type 2 subfamily. Interacts with CtaB. Heme b serves as cofactor.

The protein resides in the cell membrane. The catalysed reaction is Fe(II)-heme o + 2 A + H2O = Fe(II)-heme a + 2 AH2. It functions in the pathway porphyrin-containing compound metabolism; heme A biosynthesis; heme A from heme O: step 1/1. Its function is as follows. Catalyzes the conversion of heme O to heme A by two successive hydroxylations of the methyl group at C8. The first hydroxylation forms heme I, the second hydroxylation results in an unstable dihydroxymethyl group, which spontaneously dehydrates, resulting in the formyl group of heme A. This is Heme A synthase from Rhodopseudomonas palustris (strain TIE-1).